The following is an 810-amino-acid chain: Lon protease (810 aa).

Positions 32 to 226 (LPAIAMRSNM…RILDILARET (195 aa)) constitute a Lon N-terminal domain. ATP is bound at residue 376-383 (GPPGVGKT). A Lon proteolytic domain is found at 612–791 (KPMIGVTTGL…EEVLEVALNE (180 aa)). Residues serine 697 and lysine 740 contribute to the active site.

This sequence belongs to the peptidase S16 family. In terms of assembly, homohexamer. Organized in a ring with a central cavity.

It is found in the cytoplasm. The enzyme catalyses Hydrolysis of proteins in presence of ATP.. Functionally, ATP-dependent serine protease that mediates the selective degradation of mutant and abnormal proteins as well as certain short-lived regulatory proteins. Required for cellular homeostasis and for survival from DNA damage and developmental changes induced by stress. Degrades polypeptides processively to yield small peptide fragments that are 5 to 10 amino acids long. Binds to DNA in a double-stranded, site-specific manner. This Fervidobacterium nodosum (strain ATCC 35602 / DSM 5306 / Rt17-B1) protein is Lon protease.